The following is a 396-amino-acid chain: Putative amidohydrolase YhaA (396 aa).

Residue Asp-85 is part of the active site. The active-site Proton acceptor is Glu-143. Positions 144, 182, and 368 each coordinate Zn(2+).

The protein belongs to the peptidase M20A family. Zn(2+) is required as a cofactor. It depends on Co(2+) as a cofactor.

The sequence is that of Putative amidohydrolase YhaA (yhaA) from Bacillus subtilis (strain 168).